We begin with the raw amino-acid sequence, 277 residues long: Outer plastidial membrane protein porin (277 aa).

It belongs to the eukaryotic mitochondrial porin (TC 1.B.8.1) family.

The protein resides in the plastid outer membrane. Functionally, forms a channel through the cell membrane that allows diffusion of small hydrophilic molecules. The channel adopts an open conformation at low or zero membrane potential and a closed conformation at potentials above 30-40 mV. The open state has a weak anion selectivity whereas the closed state is cation-selective. This is Outer plastidial membrane protein porin (POR1) from Zea mays (Maize).